A 93-amino-acid chain; its full sequence is Acylphosphatase (93 aa).

The 88-residue stretch at 6–93 folds into the Acylphosphatase-like domain; that stretch reads RAIVTVKGLV…GEFDTFDVRY (88 aa). Active-site residues include Arg21 and Asn39.

This sequence belongs to the acylphosphatase family.

The enzyme catalyses an acyl phosphate + H2O = a carboxylate + phosphate + H(+). In Geobacter metallireducens (strain ATCC 53774 / DSM 7210 / GS-15), this protein is Acylphosphatase (acyP).